Here is a 284-residue protein sequence, read N- to C-terminus: Lipoyl synthase (284 aa).

Residues Cys36, Cys41, Cys47, Cys62, Cys66, Cys69, and Ser273 each coordinate [4Fe-4S] cluster. Residues 48-262 form the Radical SAM core domain; sequence WGKGTATFMI…RTIGLKKGFR (215 aa).

This sequence belongs to the radical SAM superfamily. Lipoyl synthase family. The cofactor is [4Fe-4S] cluster.

The protein localises to the cytoplasm. It carries out the reaction [[Fe-S] cluster scaffold protein carrying a second [4Fe-4S](2+) cluster] + N(6)-octanoyl-L-lysyl-[protein] + 2 oxidized [2Fe-2S]-[ferredoxin] + 2 S-adenosyl-L-methionine + 4 H(+) = [[Fe-S] cluster scaffold protein] + N(6)-[(R)-dihydrolipoyl]-L-lysyl-[protein] + 4 Fe(3+) + 2 hydrogen sulfide + 2 5'-deoxyadenosine + 2 L-methionine + 2 reduced [2Fe-2S]-[ferredoxin]. It participates in protein modification; protein lipoylation via endogenous pathway; protein N(6)-(lipoyl)lysine from octanoyl-[acyl-carrier-protein]: step 2/2. Catalyzes the radical-mediated insertion of two sulfur atoms into the C-6 and C-8 positions of the octanoyl moiety bound to the lipoyl domains of lipoate-dependent enzymes, thereby converting the octanoylated domains into lipoylated derivatives. The polypeptide is Lipoyl synthase (Phocaeicola vulgatus (strain ATCC 8482 / DSM 1447 / JCM 5826 / CCUG 4940 / NBRC 14291 / NCTC 11154) (Bacteroides vulgatus)).